The following is a 430-amino-acid chain: tRNA(Ile)-lysidine synthase (430 aa).

Ser21–Ser26 contacts ATP.

Belongs to the tRNA(Ile)-lysidine synthase family.

Its subcellular location is the cytoplasm. It catalyses the reaction cytidine(34) in tRNA(Ile2) + L-lysine + ATP = lysidine(34) in tRNA(Ile2) + AMP + diphosphate + H(+). Functionally, ligates lysine onto the cytidine present at position 34 of the AUA codon-specific tRNA(Ile) that contains the anticodon CAU, in an ATP-dependent manner. Cytidine is converted to lysidine, thus changing the amino acid specificity of the tRNA from methionine to isoleucine. The polypeptide is tRNA(Ile)-lysidine synthase (Salmonella typhimurium (strain LT2 / SGSC1412 / ATCC 700720)).